Reading from the N-terminus, the 104-residue chain is L-rhamnose mutarotase (104 aa).

Y18 lines the substrate pocket. Catalysis depends on H22, which acts as the Proton donor. Residues Y41 and 76 to 77 (WW) each bind substrate.

The protein belongs to the rhamnose mutarotase family. In terms of assembly, homodimer.

The protein resides in the cytoplasm. The catalysed reaction is alpha-L-rhamnose = beta-L-rhamnose. Its pathway is carbohydrate metabolism; L-rhamnose metabolism. In terms of biological role, involved in the anomeric conversion of L-rhamnose. In Opitutus terrae (strain DSM 11246 / JCM 15787 / PB90-1), this protein is L-rhamnose mutarotase.